We begin with the raw amino-acid sequence, 192 residues long: PBAN-type neuropeptides (192 aa).

An N-terminal signal peptide occupies residues 1 to 23 (MYKTNIVFNVLALALFSIFFASC). L47 carries the post-translational modification Leucine amide. The propeptide occupies 51 to 94 (SMKPSTEDNRQTFLRLLEAADALKFYYDQLPYERQADEPETKVT). A leucine amide mark is found at L103, L122, L158, and L168. A propeptide spanning residues 171-192 (ELSYDYPTKYRVARSVNKTMDN) is cleaved from the precursor.

Belongs to the pyrokinin family. As to expression, expression is restricted to the subesophageal ganglion.

It is found in the secreted. In terms of biological role, a hormone that controls sex pheromone production in females and pheromone responsiveness in male. Also mediates visceral muscle contractile activity (myotropic activity). Identical to MRCH which is implicated in the formation of both melanin in the cuticle and ommochrome in the epidermis of armyworm species. Diapause hormone (DH) is responsible for induction of embryonic diapause. Functionally, the three SGNPS are far less active than DH in inducing diapause eggs. Beta-SGNP expressed higher pban activity than PBAN-I, but alpha- and gamma-SGNP were far less active in pheromonotropic activity. In Bombyx mori (Silk moth), this protein is PBAN-type neuropeptides.